Consider the following 360-residue polypeptide: Peptide chain release factor 1 (360 aa).

Gln235 is modified (N5-methylglutamine).

This sequence belongs to the prokaryotic/mitochondrial release factor family. Methylated by PrmC. Methylation increases the termination efficiency of RF1.

The protein resides in the cytoplasm. Peptide chain release factor 1 directs the termination of translation in response to the peptide chain termination codons UAG and UAA. The polypeptide is Peptide chain release factor 1 (Bordetella pertussis (strain Tohama I / ATCC BAA-589 / NCTC 13251)).